The sequence spans 475 residues: Sulfate adenylyltransferase subunit 1 (475 aa).

One can recognise a tr-type G domain in the interval 25 to 239 (KSLLRFLTCG…EVLETVEIQR (215 aa)). The tract at residues 34-41 (GSVDDGKS) is G1. Residue 34–41 (GSVDDGKS) coordinates GTP. The tract at residues 92-96 (GITID) is G2. The segment at 113–116 (DTPG) is G3. GTP-binding positions include 113–117 (DTPGH) and 168–171 (NKMD). The G4 stretch occupies residues 168–171 (NKMD). Positions 206-208 (SAL) are G5.

It belongs to the TRAFAC class translation factor GTPase superfamily. Classic translation factor GTPase family. CysN/NodQ subfamily. In terms of assembly, heterodimer composed of CysD, the smaller subunit, and CysN.

The catalysed reaction is sulfate + ATP + H(+) = adenosine 5'-phosphosulfate + diphosphate. It functions in the pathway sulfur metabolism; hydrogen sulfide biosynthesis; sulfite from sulfate: step 1/3. With CysD forms the ATP sulfurylase (ATPS) that catalyzes the adenylation of sulfate producing adenosine 5'-phosphosulfate (APS) and diphosphate, the first enzymatic step in sulfur assimilation pathway. APS synthesis involves the formation of a high-energy phosphoric-sulfuric acid anhydride bond driven by GTP hydrolysis by CysN coupled to ATP hydrolysis by CysD. The protein is Sulfate adenylyltransferase subunit 1 of Escherichia coli O127:H6 (strain E2348/69 / EPEC).